A 116-amino-acid chain; its full sequence is Co-chaperonin GroES (116 aa).

Belongs to the GroES chaperonin family. As to quaternary structure, heptamer of 7 subunits arranged in a ring. Interacts with the chaperonin GroEL.

The protein resides in the cytoplasm. In terms of biological role, together with the chaperonin GroEL, plays an essential role in assisting protein folding. The GroEL-GroES system forms a nano-cage that allows encapsulation of the non-native substrate proteins and provides a physical environment optimized to promote and accelerate protein folding. GroES binds to the apical surface of the GroEL ring, thereby capping the opening of the GroEL channel. The chain is Co-chaperonin GroES from Mycoplasma pneumoniae (strain ATCC 29342 / M129 / Subtype 1) (Mycoplasmoides pneumoniae).